Reading from the N-terminus, the 219-residue chain is Peptide methionine sulfoxide reductase MsrA (219 aa).

Cysteine 58 is a catalytic residue.

It belongs to the MsrA Met sulfoxide reductase family.

It catalyses the reaction L-methionyl-[protein] + [thioredoxin]-disulfide + H2O = L-methionyl-(S)-S-oxide-[protein] + [thioredoxin]-dithiol. It carries out the reaction [thioredoxin]-disulfide + L-methionine + H2O = L-methionine (S)-S-oxide + [thioredoxin]-dithiol. Functionally, has an important function as a repair enzyme for proteins that have been inactivated by oxidation. Catalyzes the reversible oxidation-reduction of methionine sulfoxide in proteins to methionine. This chain is Peptide methionine sulfoxide reductase MsrA, found in Ectopseudomonas mendocina (strain ymp) (Pseudomonas mendocina).